The chain runs to 342 residues: Dihydroorotase (342 aa).

Zn(2+)-binding residues include histidine 13 and histidine 15. Substrate-binding positions include 15 to 17 (HLR) and asparagine 41. Positions 98, 135, and 173 each coordinate Zn(2+). At lysine 98 the chain carries N6-carboxylysine. Histidine 135 contacts substrate. Residue leucine 218 participates in substrate binding. Aspartate 246 lines the Zn(2+) pocket. Aspartate 246 is a catalytic residue. Substrate is bound by residues histidine 250 and alanine 262.

Belongs to the metallo-dependent hydrolases superfamily. DHOase family. Class II DHOase subfamily. In terms of assembly, homodimer. Requires Zn(2+) as cofactor.

It catalyses the reaction (S)-dihydroorotate + H2O = N-carbamoyl-L-aspartate + H(+). Its pathway is pyrimidine metabolism; UMP biosynthesis via de novo pathway; (S)-dihydroorotate from bicarbonate: step 3/3. In terms of biological role, catalyzes the reversible cyclization of carbamoyl aspartate to dihydroorotate. The sequence is that of Dihydroorotase from Vibrio campbellii (strain ATCC BAA-1116).